A 587-amino-acid polypeptide reads, in one-letter code: uncharacterized protein (587 aa).

The N-terminal stretch at 1 to 21 (MANRLLIYGLILWVSIIGSFA) is a signal peptide. At 22 to 541 (LDRNKTAQNA…LEKEVSFQRR (520 aa)) the chain is on the lumenal side. N-linked (GlcNAc...) asparagine glycosylation is present at asparagine 25. The segment at 44–108 (GSTTNVQKEH…RNPGDSSNSF (65 aa)) is disordered. The span at 63–90 (RTHDFRQASKVDIRQADIRENGERKEQD) shows a compositional bias: basic and acidic residues. The span at 91–108 (ALTQPATPRNPGDSSNSF) shows a compositional bias: polar residues. The 169-residue stretch at 163–331 (NEWSEREENQ…SLIKVYGKSM (169 aa)) folds into the SUN domain. N-linked (GlcNAc...) asparagine glycosylation is found at asparagine 378, asparagine 381, asparagine 408, asparagine 448, and asparagine 486. A helical membrane pass occupies residues 542-562 (IVYASFFAFVGLISYLLITRE). The Cytoplasmic segment spans residues 563-587 (LYFEDFEESKNGAIEKADIVQQAIR).

The protein belongs to the SLP1 family. Interacts with EMP65.

The protein localises to the endoplasmic reticulum membrane. In terms of biological role, may be involved in membrane protein folding. Required for localization of MPS3 to the nuclear envelope. This is an uncharacterized protein from Saccharomyces cerevisiae (strain ATCC 204508 / S288c) (Baker's yeast).